The sequence spans 323 residues: tRNA dimethylallyltransferase (323 aa).

13–20 contacts ATP; the sequence is GPTASGKT. A substrate-binding site is contributed by 15 to 20; it reads TASGKT. Interaction with substrate tRNA regions lie at residues 42-45, 166-170, 251-256, and 284-291; these read DSAL, QRIQR, RCVGYR, and KRQITWLR.

The protein belongs to the IPP transferase family. Monomer. It depends on Mg(2+) as a cofactor.

It catalyses the reaction adenosine(37) in tRNA + dimethylallyl diphosphate = N(6)-dimethylallyladenosine(37) in tRNA + diphosphate. Functionally, catalyzes the transfer of a dimethylallyl group onto the adenine at position 37 in tRNAs that read codons beginning with uridine, leading to the formation of N6-(dimethylallyl)adenosine (i(6)A). This is tRNA dimethylallyltransferase from Acidovorax sp. (strain JS42).